The following is a 58-amino-acid chain: Small ribosomal subunit protein bS21 (58 aa).

The disordered stretch occupies residues 34 to 58 (KREHYEKPSVKRKKKSEAARKRKFK). The span at 43–58 (VKRKKKSEAARKRKFK) shows a compositional bias: basic residues.

The protein belongs to the bacterial ribosomal protein bS21 family.

The sequence is that of Small ribosomal subunit protein bS21 from Clostridium acetobutylicum (strain ATCC 824 / DSM 792 / JCM 1419 / IAM 19013 / LMG 5710 / NBRC 13948 / NRRL B-527 / VKM B-1787 / 2291 / W).